Reading from the N-terminus, the 340-residue chain is Glyceraldehyde-3-phosphate dehydrogenase (340 aa).

Residues 11–12 (SI) and Gly111 contribute to the NAD(+) site. D-glyceraldehyde 3-phosphate is bound at residue 140–142 (SCN). The active-site Nucleophile is Cys141. Arg169 is a binding site for NAD(+). 195–196 (HG) contacts D-glyceraldehyde 3-phosphate. NAD(+) is bound at residue Gln303.

The protein belongs to the glyceraldehyde-3-phosphate dehydrogenase family. Homotetramer.

The protein localises to the cytoplasm. It catalyses the reaction D-glyceraldehyde 3-phosphate + phosphate + NADP(+) = (2R)-3-phospho-glyceroyl phosphate + NADPH + H(+). It carries out the reaction D-glyceraldehyde 3-phosphate + phosphate + NAD(+) = (2R)-3-phospho-glyceroyl phosphate + NADH + H(+). The protein operates within carbohydrate degradation; glycolysis; pyruvate from D-glyceraldehyde 3-phosphate: step 1/5. The sequence is that of Glyceraldehyde-3-phosphate dehydrogenase from Methanococcus maripaludis (strain DSM 14266 / JCM 13030 / NBRC 101832 / S2 / LL).